Here is a 254-residue protein sequence, read N- to C-terminus: Autophagy-related protein 5 (254 aa).

Residue Lys-102 forms a Glycyl lysine isopeptide (Lys-Gly) (interchain with G-Cter in ATG12) linkage.

Belongs to the ATG5 family. Conjugated with ATG12. The ATG5-ATG12 conjugate forms a complex with several units of ATG16. The ATG12-ATG5 conjugate also associates with ATG3. In terms of processing, conjugated to ATG12; which is essential for autophagy. Conjugation with ATG12 involves ATG7 as an E1-like activating enzyme and ATG10 as an E2-like conjugating enzyme.

Its subcellular location is the preautophagosomal structure membrane. In terms of biological role, involved in cytoplasm to vacuole transport (Cvt) and autophagic vesicle formation. Autophagy is essential for maintenance of amino acid levels and protein synthesis under nitrogen starvation. Required for selective autophagic degradation of the nucleus (nucleophagy). Also required for mitophagy, which eliminates defective or superfluous mitochondria in order to fulfill cellular energy requirements and prevent excess ROS production. Conjugation with ATG12, through a ubiquitin-like conjugating system involving ATG7 as an E1-like activating enzyme and ATG10 as an E2-like conjugating enzyme, is essential for its function. The ATG12-ATG5 conjugate acts as an E3-like enzyme which is required for lipidation of ATG8 and ATG8 association to the vesicle membranes. ATG12-ATG5 rearranges the ATG3 catalytic center and enhances its E2 activity. Autophagy is required for proper vegetative growth, asexual/sexual reproduction, and full virulence. Autophagy is particularly involved in the biosynthesis of deoxynivalenol (DON), an important virulence determinant. The protein is Autophagy-related protein 5 of Gibberella zeae (strain ATCC MYA-4620 / CBS 123657 / FGSC 9075 / NRRL 31084 / PH-1) (Wheat head blight fungus).